Here is a 283-residue protein sequence, read N- to C-terminus: Elongation factor Ts (283 aa).

Residues 79–82 (TDFV) are involved in Mg(2+) ion dislocation from EF-Tu.

It belongs to the EF-Ts family.

The protein resides in the cytoplasm. Functionally, associates with the EF-Tu.GDP complex and induces the exchange of GDP to GTP. It remains bound to the aminoacyl-tRNA.EF-Tu.GTP complex up to the GTP hydrolysis stage on the ribosome. The protein is Elongation factor Ts of Shewanella amazonensis (strain ATCC BAA-1098 / SB2B).